The primary structure comprises 505 residues: Deoxyguanosinetriphosphate triphosphohydrolase (505 aa).

The 208-residue stretch at Arg-66–Cys-273 folds into the HD domain.

This sequence belongs to the dGTPase family. Type 1 subfamily. Homotetramer. Requires Mg(2+) as cofactor.

The enzyme catalyses dGTP + H2O = 2'-deoxyguanosine + triphosphate + H(+). In terms of biological role, dGTPase preferentially hydrolyzes dGTP over the other canonical NTPs. The polypeptide is Deoxyguanosinetriphosphate triphosphohydrolase (Shigella flexneri).